A 247-amino-acid polypeptide reads, in one-letter code: Small ribosomal subunit protein uS2 (247 aa).

This sequence belongs to the universal ribosomal protein uS2 family.

This is Small ribosomal subunit protein uS2 from Pseudomonas savastanoi pv. phaseolicola (strain 1448A / Race 6) (Pseudomonas syringae pv. phaseolicola (strain 1448A / Race 6)).